We begin with the raw amino-acid sequence, 114 residues long: UPF0145 protein Acry_1752 (114 aa).

Belongs to the UPF0145 family.

The polypeptide is UPF0145 protein Acry_1752 (Acidiphilium cryptum (strain JF-5)).